A 154-amino-acid polypeptide reads, in one-letter code: Large ribosomal subunit protein uL15 (154 aa).

Residues M1 to T13 show a composition bias toward basic and acidic residues. The segment at M1–V44 is disordered. Positions R21 to V35 are enriched in gly residues.

Belongs to the universal ribosomal protein uL15 family. In terms of assembly, part of the 50S ribosomal subunit.

Functionally, binds to the 23S rRNA. This is Large ribosomal subunit protein uL15 from Bartonella bacilliformis (strain ATCC 35685 / KC583 / Herrer 020/F12,63).